A 232-amino-acid polypeptide reads, in one-letter code: Pseudaminic acid cytidylyltransferase (232 aa).

This sequence belongs to the CMP-NeuNAc synthase family. Mg(2+) serves as cofactor.

It catalyses the reaction pseudaminate + CTP = CMP-pseudaminate + diphosphate. Its function is as follows. Catalyzes the final step in the biosynthesis of pseudaminic acid, a sialic-acid-like sugar that is used to modify flagellin. Mediates the activation of pseudaminic acid with CMP by forming CMP-pseudaminic acid. This Campylobacter jejuni subsp. jejuni serotype O:2 (strain ATCC 700819 / NCTC 11168) protein is Pseudaminic acid cytidylyltransferase (pseF).